A 185-amino-acid chain; its full sequence is Peptidyl-tRNA hydrolase (185 aa).

Residue Tyr-14 coordinates tRNA. The Proton acceptor role is filled by His-19. TRNA contacts are provided by Phe-64, Asn-66, and Asn-112.

Belongs to the PTH family. Monomer.

Its subcellular location is the cytoplasm. It catalyses the reaction an N-acyl-L-alpha-aminoacyl-tRNA + H2O = an N-acyl-L-amino acid + a tRNA + H(+). In terms of biological role, hydrolyzes ribosome-free peptidyl-tRNAs (with 1 or more amino acids incorporated), which drop off the ribosome during protein synthesis, or as a result of ribosome stalling. Catalyzes the release of premature peptidyl moieties from peptidyl-tRNA molecules trapped in stalled 50S ribosomal subunits, and thus maintains levels of free tRNAs and 50S ribosomes. The sequence is that of Peptidyl-tRNA hydrolase from Alkaliphilus oremlandii (strain OhILAs) (Clostridium oremlandii (strain OhILAs)).